We begin with the raw amino-acid sequence, 286 residues long: Protein GrpE (286 aa).

Disordered regions lie at residues 1–51 (MSED…ETTA) and 260–286 (VAAP…QPTT). Low complexity-rich tracts occupy residues 39–50 (QPSSTPQTPETT) and 271–286 (TEST…QPTT).

Belongs to the GrpE family. Homodimer.

It is found in the cytoplasm. Its function is as follows. Participates actively in the response to hyperosmotic and heat shock by preventing the aggregation of stress-denatured proteins, in association with DnaK and GrpE. It is the nucleotide exchange factor for DnaK and may function as a thermosensor. Unfolded proteins bind initially to DnaJ; upon interaction with the DnaJ-bound protein, DnaK hydrolyzes its bound ATP, resulting in the formation of a stable complex. GrpE releases ADP from DnaK; ATP binding to DnaK triggers the release of the substrate protein, thus completing the reaction cycle. Several rounds of ATP-dependent interactions between DnaJ, DnaK and GrpE are required for fully efficient folding. The polypeptide is Protein GrpE (Gloeothece citriformis (strain PCC 7424) (Cyanothece sp. (strain PCC 7424))).